A 637-amino-acid chain; its full sequence is Chaperone protein HtpG (637 aa).

The segment at 1–345 (MSQQETHGFQ…SNDLPLNVSR (345 aa)) is a; substrate-binding. The interval 346-562 (EILQDNQVTT…EGEMSTQMIK (217 aa)) is b. A c region spans residues 563-637 (LMQAAGQPVP…TNQMLLASVK (75 aa)).

It belongs to the heat shock protein 90 family. As to quaternary structure, homodimer.

It is found in the cytoplasm. In terms of biological role, molecular chaperone. Has ATPase activity. The chain is Chaperone protein HtpG from Shewanella frigidimarina (strain NCIMB 400).